A 107-amino-acid chain; its full sequence is Protein HitA (107 aa).

In terms of domain architecture, HIT spans Ile-5–Val-107. The short motif at His-97 to His-101 is the Histidine triad motif element.

The chain is Protein HitA (hitA) from Neisseria gonorrhoeae.